Consider the following 360-residue polypeptide: Aminomethyltransferase (360 aa).

The protein belongs to the GcvT family. The glycine cleavage system is composed of four proteins: P, T, L and H.

The enzyme catalyses N(6)-[(R)-S(8)-aminomethyldihydrolipoyl]-L-lysyl-[protein] + (6S)-5,6,7,8-tetrahydrofolate = N(6)-[(R)-dihydrolipoyl]-L-lysyl-[protein] + (6R)-5,10-methylene-5,6,7,8-tetrahydrofolate + NH4(+). In terms of biological role, the glycine cleavage system catalyzes the degradation of glycine. This Pseudomonas syringae pv. tomato (strain ATCC BAA-871 / DC3000) protein is Aminomethyltransferase.